Reading from the N-terminus, the 47-residue chain is Protein PsbN (47 aa).

Residues 9–31 (YSLLIAMVTITFGLTGYGLYTAF) form a helical membrane-spanning segment.

Belongs to the PsbN family.

The protein resides in the cellular thylakoid membrane. In terms of biological role, may play a role in photosystem I and II biogenesis. The polypeptide is Protein PsbN (Prochlorococcus marinus (strain MIT 9303)).